A 46-amino-acid polypeptide reads, in one-letter code: Large ribosomal subunit protein bL34c (46 aa).

This sequence belongs to the bacterial ribosomal protein bL34 family.

The protein localises to the plastid. The protein resides in the chloroplast. The polypeptide is Large ribosomal subunit protein bL34c (rpl34) (Guillardia theta (Cryptophyte)).